We begin with the raw amino-acid sequence, 735 residues long: Exocyst complex component 7 (735 aa).

Coiled-coil stretches lie at residues 5 to 42 (QEAS…TKNM) and 63 to 85 (VHKQ…SCLD). Phosphoserine is present on serine 133. A disordered region spans residues 239–268 (HKSSSSSGVPYSPAIPNKRKDTPTKKPVKR).

This sequence belongs to the EXO70 family. The exocyst complex is composed of EXOC1, EXOC2, EXOC3, EXOC4, EXOC5, EXOC6, EXOC7 and EXOC8. Interacts with ARHQ in a GTP-dependent manner. Interacts with RAB11FIP3. As to expression, abundant in the ventricular zone, the outer subventricular zone and the cortical plate of the fetal cortex.

It is found in the cytoplasm. It localises to the cytosol. The protein resides in the cell membrane. Its subcellular location is the midbody. The protein localises to the midbody ring. Component of the exocyst complex involved in the docking of exocytic vesicles with fusion sites on the plasma membrane. In adipocytes, plays a crucial role in targeting SLC2A4 vesicle to the plasma membrane in response to insulin, perhaps directing the vesicle to the precise site of fusion. It is required for neuron survival and plays an essential role in cortical development. In Homo sapiens (Human), this protein is Exocyst complex component 7 (EXOC7).